The sequence spans 252 residues: Mitochondrial cardiolipin hydrolase (252 aa).

The Mitochondrial intermembrane portion of the chain corresponds to 1 to 4 (MGRL). Residues 1–39 (MGRLSWQVAAAAAVGLALTLEALPWVLRWLRSRRRRPRR) are required for mitochondrial localization. Residues 5–27 (SWQVAAAAAVGLALTLEALPWVL) form a helical membrane-spanning segment. Residues 28–252 (RWLRSRRRRP…TCGTSSESQT (225 aa)) are Cytoplasmic-facing. The segment at 45–78 (PSQVTCTEALLRAPGAELAELPEGCPCGLPHGES) adopts a C3H1-type; atypical zinc-finger fold. Residues 151–178 (DPGYMHHKFAIVDKRVLITGSLNWTTQA) enclose the PLD phosphodiesterase domain. Catalysis depends on residues histidine 156, lysine 158, and aspartate 163.

This sequence belongs to the phospholipase D family. MitoPLD/Zucchini subfamily. As to quaternary structure, homodimer. Interacts with MOV10L1. Interacts with MIGA1 and MIGA2; possibly facilitating homodimer formation. Interacts with GK2. In terms of tissue distribution, predominantly expressed in testis and ovary, but not limited to gonads (at protein level). It is also found in brain, heart, pituitary gland, prostate, pancreas, thyroid, bone marrow, lung and muscle.

The protein localises to the mitochondrion outer membrane. The protein resides in the golgi apparatus. It carries out the reaction a cardiolipin + H2O = a 1,2-diacyl-sn-glycero-3-phospho-(1'-sn-glycerol) + a 1,2-diacyl-sn-glycero-3-phosphate + H(+). MYC stimulates its phospholipase activity. MIGA1 and MIGA2 increase PLD6 self-association affinity and affects the homodimer conformation facilitating its phospholipase activity over the nuclease activity. Single stranded DNA (ssDNA) hydrolase activity does not depend upon, but is stimulated by the presence of Ca(2+) and Mn(2+). Its function is as follows. Presents phospholipase and nuclease activities, depending on the different physiological conditions. Interaction with Mitoguardin (MIGA1 or MIGA2) affects the dimer conformation, facilitating the lipase activity over the nuclease activity. Plays a key role in mitochondrial fusion and fission via its phospholipase activity. In its phospholipase role, it uses the mitochondrial lipid cardiolipin as substrate to generate phosphatidate (PA or 1,2-diacyl-sn-glycero-3-phosphate), a second messenger signaling lipid. Production of PA facilitates Mitofusin-mediated fusion, whereas the cleavage of PA by the Lipin family of phosphatases produces diacylgycerol (DAG) which promotes mitochondrial fission. Both Lipin and DAG regulate mitochondrial dynamics and membrane fusion/fission, important processes for adapting mitochondrial metabolism to changes in cell physiology. Mitochondrial fusion enables cells to cope with the increased nucleotide demand during DNA synthesis. Mitochondrial function and dynamics are closely associated with biological processes such as cell growth, proliferation, and differentiation. Mediator of MYC activity, promotes mitochondrial fusion and activates AMPK which in turn inhibits YAP/TAZ, thereby inducing cell growth and proliferation. The endonuclease activity plays a critical role in PIWI-interacting RNA (piRNA) biogenesis during spermatogenesis. Implicated in spermatogenesis and sperm fertility in testicular germ cells, its single strand-specific nuclease activity is critical for the biogenesis/maturation of PIWI-interacting RNA (piRNA). MOV10L1 selectively binds to piRNA precursors and funnels them to the endonuclease that catalyzes the first cleavage step of piRNA processing to generate piRNA intermediate fragments that are subsequently loaded to Piwi proteins. Cleaves either DNA or RNA substrates with similar affinity, producing a 5' phosphate end, in this way it participates in the processing of primary piRNA transcripts. piRNAs provide essential protection against the activity of mobile genetic elements. piRNA-mediated transposon silencing is thus critical for maintaining genome stability, in particular in germline cells when transposons are mobilized as a consequence of wide-spread genomic demethylation. PA may act as signaling molecule in the recognition/transport of the precursor RNAs of primary piRNAs. Interacts with tesmin in testes, suggesting a role in spermatogenesis via association with its interacting partner. This is Mitochondrial cardiolipin hydrolase (PLD6) from Homo sapiens (Human).